A 64-amino-acid chain; its full sequence is Large ribosomal subunit protein bL32 (64 aa).

The segment at 1-35 (MAVQKSRVTPSRRGQRRSHDALTAKQLSTDPTSGE) is disordered.

Belongs to the bacterial ribosomal protein bL32 family.

The protein is Large ribosomal subunit protein bL32 of Xanthomonas campestris pv. campestris (strain 8004).